A 520-amino-acid polypeptide reads, in one-letter code: Cyclin-L2 (520 aa).

Ala-2 carries the N-acetylalanine modification. 2 cyclin-like regions span residues 83–185 (ELIQ…RVLK) and 198–282 (KIIV…KILQ). Residues 316–520 (LPGGTQVLDG…DHPGHSRHRR (205 aa)) are disordered. Phosphoserine is present on residues Ser-330, Ser-338, Ser-348, and Ser-351. The segment covering 357–367 (RRLEGAKKAKA) has biased composition (basic and acidic residues). Ser-369 carries the phosphoserine modification. The segment covering 376-390 (KGRESRSRSRSREQS) has biased composition (basic and acidic residues). The RS stretch occupies residues 385–423 (RSREQSYSRSPSRSASPKRRKSDSGSTSGGSKSQSRSRS). Residues 408 to 436 (SGSTSGGSKSQSRSRSRSDSPPRQAPRSA) show a composition bias toward low complexity. Over residues 441-454 (SEIRGSRKSKDCKY) the composition is skewed to basic and acidic residues. Basic residues predominate over residues 456 to 471 (QKPHKSRSRSSSRSRS). Basic and acidic residues-rich tracts occupy residues 472 to 481 (RSRERADNPG) and 489 to 514 (YYRDQRRERSRSYERTGRRYERDHPG).

This sequence belongs to the cyclin family. Cyclin L subfamily. Interacts with CDK11A, CDK11B, CDK12, CDK13 and POLR2A, the hyperphosphorylated C-terminal domain (CTD) of RNA polymerase II. May form a ternary complex with CDK11B and casein kinase II (CKII). Interacts with pre-mRNA-splicing factors, including at least SRSF1, SRSF2 AND SRSF7/SLU7. Widely expressed.

It is found in the nucleus speckle. It localises to the nucleus. Its subcellular location is the nucleoplasm. Functionally, involved in pre-mRNA splicing. May induce cell death, possibly by acting on the transcription and RNA processing of apoptosis-related factors. The polypeptide is Cyclin-L2 (CCNL2) (Homo sapiens (Human)).